Reading from the N-terminus, the 166-residue chain is KH homology domain-containing protein 1A (166 aa).

The KH; atypical domain occupies 19–78 (PLVFDMEEDKEDYIFGPHDEYLHTLEVHSNTLIQLERWFTPTGQTRVTVVGPLKARLWVM).

The protein belongs to the KHDC1 family.

It localises to the cytoplasm. Its function is as follows. Has pro-apoptotic activity. This chain is KH homology domain-containing protein 1A (Khdc1a), found in Mus musculus (Mouse).